Here is a 225-residue protein sequence, read N- to C-terminus: uncharacterized protein (225 aa).

A run of 4 helical transmembrane segments spans residues Leu40–Val60, Leu63–Phe83, Leu151–Leu171, and Ile176–Leu196.

Its subcellular location is the membrane. This is an uncharacterized protein from Saccharomyces cerevisiae (strain ATCC 204508 / S288c) (Baker's yeast).